A 462-amino-acid polypeptide reads, in one-letter code: Prenyltransferase phqI (462 aa).

Glutamate 101 is a binding site for brevianamide F. Positions 117, 204, 206, 273, 275, 357, 442, and 446 each coordinate dimethylallyl diphosphate.

Belongs to the tryptophan dimethylallyltransferase family.

The protein operates within alkaloid biosynthesis. Functionally, prenyltransferase; part of the gene cluster that mediates the biosynthesis of paraherquamide, a fungal indole alkaloid that belongs to a family of natural products containing a characteristic bicyclo[2.2.2]diazaoctane core. The first steps in the biosynthesis of paraherquamide is the production of the beta-methyl-proline precursor from L-isoleucine. They require oxidation of a terminally hydroxylated L-isoleucine to the corresponding aldehyde by enzymes which have still to be identified. Spontaneous cyclization and dehydration would yield the 4-methyl pyrolline-5-carboxylic acid, which is then reduced by the pyrroline-5-carboxylate reductase phqD leading to the beta-methyl-proline precursor. The next step of paraherquamide biosynthesis involves coupling of beta-methyl-proline and L-tryptophan by the bimodular NRPS phqB, to produce a monooxopiperazine intermediate. The reductase (R) domain of phqB utilizes NADPH for hydride transfer to reduce the thioester bond of the T domain-tethered linear dipeptide to a hemithioaminal intermediate, which spontaneously cleaves the C-S bond to release the aldehyde product. This compound undergoes spontaneous cyclization and dehydration to give a dienamine which is reverse prenylated at C-2 by the reverse prenyltransferase phqJ. The other prenyltransferase present in the cluster, phqI may be a redundant gene in the pathway. During biosynthetic assembly, the key step to produce the polycyclic core is catalyzed by the bifunctional reductase and intramolecular [4+2] Diels-Alderase, phqE, resulting in formation of the [2.2.2] diazaoctane intermediate preparaherquamide. Following formation of preparaherquamide, an indole 2,3-epoxidation-initiated pinacol-like rearrangement is catalyzed by the phqK FAD-dependent monooxygenase. The prenyltransferase phqA, the cytochrome P450 monooxygenase phqL, and the FAD-linked oxidoreductase phqH (or the cytochrome P450 monooxygenase phqM), are proposed to be involved in the formation of the pyran ring. The FAD-dependent monooxygenase phqK is likely responsible for generation of the spiro-oxindole, and the N-methylation is likely mediated by the phqN methyltransferase leading to the isolable natural product paraherquamide F. However, the order of these biosynthetic steps has still to be determined. In late-stage paraherquamide biosynthesis, the third P450 monooxygenase, phqO, is probably responsible for the C-14 hydroxylation, transforming paraherquamide F to paraherquamide G, and paraherquamide E to the final product paraherquamide A. The expansion from the 6-membered ring pyran (in paraherquamides F and G) to the 7-membered dioxepin ring (in paraherquamides A and E) represents a poorly understood but intriguing process that probably involves the 2-oxoglutarate-dependent dioxygenase phqC. Finally, the remaining members of the paraherquamide cluster, including phqI as well as phqM (or phqH), do not have a clearly prescribed role and appear to be redundant. The sequence is that of Prenyltransferase phqI from Penicillium fellutanum.